The following is a 336-amino-acid chain: NmrA-like family domain-containing oxidoreductase FrzB (336 aa).

Lysine 135 is a binding site for NADP(+).

This sequence belongs to the NmrA-type oxidoreductase family.

It catalyses the reaction 4-{[(2S,5S)-5-[(4-hydroxyphenyl)methyl]-2,5-dihydropyrazin-2-yl]methyl}phenol + 2 NADPH + 2 H(+) = (S,S)-2,5-di-(p-hydroxybenzyl)piperazine + 2 NADP(+). Its pathway is secondary metabolite biosynthesis. In terms of biological role, nmrA-like family domain-containing oxidoreductase; part of the gene cluster that mediates the biosynthesis of the alkaloid (-)-FR901483, a potent immunosuppressant that shows efficacy in animal models and a probable inhibitor of purine nucleotide biosynthesis by targeting phosphoribosylpyrophosphate amidotransferase (PPAT). Within the pathway, FrzB catalyzes the reduction of 4-{[(2S,5S)-5-[(4-hydroxyphenyl)methyl]-2,5-dihydropyrazin-2-yl]methyl}phenol to produce the (S,S)-dityrosyl-piperazine intermediate. The biosynthesis of (-)-FR901483 starts with the condensation of two L-tyrosines to yield (S,S)-dityrosyl-piperazine. This process occurs in 3 steps with the non-canonical nonribosomal peptide synthetase FrzA catalyzing the reduction of L-tyrosine into L-tyrosinal, the spontaneous condensation of 2 L-tyrosinal units, and the subsequent reduction by the NmrA-like family domain-containing oxidoreductase FrzB. The cytochrome P450 monooxygenase FrzC then performs coupling between N10 and C1' to morph the piperazine into a 1,4-diazabicyclo[3.2.1]octane spiro-fused to a 2,5-cyclohexadienone. The dienone portion is further reduced to cyclohexanone by the flavin-dependent reductase FrzD. The methyltranserases (MTs) FrzE and FrzF are then involved in the methylation at the C10' amine and the C4 phenolic oxygen, respectively. The order of the two MTs appear to be interchangeable. Cleavage of the C9-N10' bond by the dioxygenase FrzG then leads to formation of a conjugated iminium. In addition to the oxidation of C9, an additional dehydrogenation between C7 and C8 can occur to give a likely shunt product. The next biosynthetic step is the intramolecular aldol condensation catalyzed by the newly identified aldolase FrzH to yield an aza-tricyclic product with the formation of a C9-C3' bond. The short-chain dehydrogenase/reductase FrzI then produces dephospho-(-)-FR901483 that is phosphorylated at C4'-OH into (-)-FR901483 by the phosphotransferase FrzJ. This Cladobotryum sp protein is NmrA-like family domain-containing oxidoreductase FrzB.